The chain runs to 293 residues: Mycothiol S-conjugate amidase (293 aa).

His-13, Asp-16, and His-144 together coordinate Zn(2+).

Belongs to the MshB deacetylase family. Mca subfamily. In terms of assembly, monomer. Zn(2+) serves as cofactor.

It carries out the reaction mycothiol S-conjugate + H2O = an N-acetyl-L-cysteine-S-conjugate + 1D-myo-inositol 2-amino-2-deoxy-alpha-D-glucopyranoside. In terms of biological role, a mycothiol (MSH, N-acetylcysteinyl-glucosaminyl-inositol) S-conjugate amidase, it recycles conjugated MSH to the N-acetyl cysteine conjugate (AcCys S-conjugate, a mercapturic acid) and the MSH precursor. Involved in MSH-dependent detoxification of a number of alkylating agents and antibiotics. In Streptomyces coelicolor (strain ATCC BAA-471 / A3(2) / M145), this protein is Mycothiol S-conjugate amidase.